A 579-amino-acid polypeptide reads, in one-letter code: Proline--tRNA ligase (579 aa).

Belongs to the class-II aminoacyl-tRNA synthetase family. ProS type 1 subfamily. Homodimer.

Its subcellular location is the cytoplasm. The catalysed reaction is tRNA(Pro) + L-proline + ATP = L-prolyl-tRNA(Pro) + AMP + diphosphate. Functionally, catalyzes the attachment of proline to tRNA(Pro) in a two-step reaction: proline is first activated by ATP to form Pro-AMP and then transferred to the acceptor end of tRNA(Pro). As ProRS can inadvertently accommodate and process non-cognate amino acids such as alanine and cysteine, to avoid such errors it has two additional distinct editing activities against alanine. One activity is designated as 'pretransfer' editing and involves the tRNA(Pro)-independent hydrolysis of activated Ala-AMP. The other activity is designated 'posttransfer' editing and involves deacylation of mischarged Ala-tRNA(Pro). The misacylated Cys-tRNA(Pro) is not edited by ProRS. This Hamiltonella defensa subsp. Acyrthosiphon pisum (strain 5AT) protein is Proline--tRNA ligase.